Here is a 77-residue protein sequence, read N- to C-terminus: UPF0291 protein EAT1b_0405 (77 aa).

Residues 53–77 form a disordered region; sequence KVVDPDGNDVTPEKLKEDQKRYRGE. Residues 63 to 77 are compositionally biased toward basic and acidic residues; the sequence is TPEKLKEDQKRYRGE.

The protein belongs to the UPF0291 family.

The protein localises to the cytoplasm. The chain is UPF0291 protein EAT1b_0405 from Exiguobacterium sp. (strain ATCC BAA-1283 / AT1b).